A 487-amino-acid polypeptide reads, in one-letter code: Chromosomal replication initiator protein DnaA (487 aa).

Residues M1–T79 form a domain I, interacts with DnaA modulators region. The domain II stretch occupies residues T79 to P142. Residues F143–I359 are domain III, AAA+ region. Residues G187, G189, K190, and T191 each contribute to the ATP site. The domain IV, binds dsDNA stretch occupies residues D360–N487.

The protein belongs to the DnaA family. Oligomerizes as a right-handed, spiral filament on DNA at oriC.

Its subcellular location is the cytoplasm. Plays an essential role in the initiation and regulation of chromosomal replication. ATP-DnaA binds to the origin of replication (oriC) to initiate formation of the DNA replication initiation complex once per cell cycle. Binds the DnaA box (a 9 base pair repeat at the origin) and separates the double-stranded (ds)DNA. Forms a right-handed helical filament on oriC DNA; dsDNA binds to the exterior of the filament while single-stranded (ss)DNA is stabiized in the filament's interior. The ATP-DnaA-oriC complex binds and stabilizes one strand of the AT-rich DNA unwinding element (DUE), permitting loading of DNA polymerase. After initiation quickly degrades to an ADP-DnaA complex that is not apt for DNA replication. Binds acidic phospholipids. This Borreliella burgdorferi (strain ZS7) (Borrelia burgdorferi) protein is Chromosomal replication initiator protein DnaA.